The sequence spans 273 residues: uncharacterized protein (273 aa).

Belongs to the ycf23 family.

It is found in the plastid. The protein localises to the chloroplast. This is an uncharacterized protein from Pyropia yezoensis (Susabi-nori).